Consider the following 292-residue polypeptide: Proteasome subunit beta 2 (292 aa).

Residues 1-59 (MTVDRAPRITDGDTRLSFGSNLSSFSEYLRVHAPEHLPQNRFADTGGVVMGGGDVAPHG) constitute a propeptide, removed in mature form; by autocatalysis. Catalysis depends on T60, which acts as the Nucleophile.

It belongs to the peptidase T1B family. In terms of assembly, the 20S proteasome core is composed of 14 alpha and 14 beta subunits that assemble into four stacked heptameric rings, resulting in a barrel-shaped structure. The two inner rings, each composed of seven catalytic beta subunits, are sandwiched by two outer rings, each composed of seven alpha subunits. All four combinations of alpha- and beta-subunits (beta2-alpha1, beta2-alpha2, beta1-alpha2 and beta1-alpha1) yield fully assembled and proteolytically active proteasomes. The catalytic chamber with the active sites is on the inside of the barrel. Has probably a gated structure, the ends of the cylinder being occluded by the N-termini of the alpha-subunits. Is likely capped by the proteasome-associated ATPase, ARC.

Its subcellular location is the cytoplasm. It catalyses the reaction Cleavage of peptide bonds with very broad specificity.. It functions in the pathway protein degradation; proteasomal Pup-dependent pathway. With respect to regulation, the formation of the proteasomal ATPase ARC-20S proteasome complex, likely via the docking of the C-termini of ARC into the intersubunit pockets in the alpha-rings, may trigger opening of the gate for substrate entry. Interconversion between the open-gate and close-gate conformations leads to a dynamic regulation of the 20S proteasome proteolysis activity. Functionally, component of the proteasome core, a large protease complex with broad specificity involved in protein degradation. The R.erythropolis proteasomes are able to cleave oligopeptides after Tyr, Phe and Leu, very poorly after Arg but not after Glu. Thus, displays chymotrypsin-like activity, low trypsin-like activity but no caspase-like activity. The chain is Proteasome subunit beta 2 from Rhodococcus erythropolis (Arthrobacter picolinophilus).